The sequence spans 87 residues: Small ribosomal subunit protein bS20 (87 aa).

A disordered region spans residues 1–26 (MANTKSALKRIRQTATRTARNRAVTS). Residues 13 to 23 (QTATRTARNRA) are compositionally biased toward low complexity.

The protein belongs to the bacterial ribosomal protein bS20 family.

Functionally, binds directly to 16S ribosomal RNA. The polypeptide is Small ribosomal subunit protein bS20 (Akkermansia muciniphila (strain ATCC BAA-835 / DSM 22959 / JCM 33894 / BCRC 81048 / CCUG 64013 / CIP 107961 / Muc)).